Here is a 159-residue protein sequence, read N- to C-terminus: Keratin-associated protein 11-1 (159 aa).

4 tandem repeats follow at residues 107-116 (CQPLSGVSTV), 117-126 (CKPVRSISTV), 127-136 (CQPVGGVSTI), and 137-146 (CQPTCGVSRT). The interval 107 to 146 (CQPLSGVSTVCKPVRSISTVCQPVGGVSTICQPTCGVSRT) is 4 X 10 AA approximate repeats.

The protein belongs to the PMG family. Wool.

In the wool cortex, wool keratin intermediate filaments are embedded in an interfilamentous matrix, consisting of wool keratin-associated proteins (KRTAP), which are essential for the formation of a rigid and resistant wool shaft through their extensive disulfide bond cross-linking with abundant cysteine residues of wool keratins. The matrix proteins include the high-sulfur and high-glycine-tyrosine keratins. This is Keratin-associated protein 11-1 (KRTAP11-1) from Capra hircus (Goat).